Here is a 478-residue protein sequence, read N- to C-terminus: Vitronectin (478 aa).

Positions 1–19 are cleaved as a signal peptide; that stretch reads MAPLRPLLILALLAWVALA. In terms of domain architecture, SMB spans 20 to 63; sequence DQESCKGRCTEGFNVDKKCQCDELCSYYQSCCTDYTAECKPQVT. Disulfide bonds link cysteine 24–cysteine 28, cysteine 24–cysteine 40, cysteine 28–cysteine 58, cysteine 38–cysteine 40, cysteine 38–cysteine 51, cysteine 44–cysteine 50, and cysteine 51–cysteine 58. A Cell attachment site motif is present at residues 64–66; it reads RGD. Threonine 69 carries the post-translational modification Phosphothreonine; by CK2; in vitro. At tyrosine 75 the chain carries Sulfotyrosine. Threonine 76 carries the post-translational modification Phosphothreonine; by CK2; in vitro. Tyrosine 78 bears the Sulfotyrosine mark. N-linked (GlcNAc...) (complex) asparagine glycosylation occurs at asparagine 86. Residues 91–158 form a disordered region; the sequence is EQVGGPSLTS…PPAEEELCSG (68 aa). Over residues 97-112 the composition is skewed to polar residues; it reads SLTSDLQAQSKGNPEQ. Phosphoserine occurs at positions 130 and 137. The segment covering 133 to 143 has biased composition (basic and acidic residues); it reads EGIDSRPETLH. 3 Hemopexin repeats span residues 158–202, 203–250, and 251–305; these read GKPF…VWGI, EGPI…FDGI, and PDNV…FEHF. Asparagine 169 carries N-linked (GlcNAc...) asparagine glycosylation. N-linked (GlcNAc...) (complex) asparagine glycosylation is present at asparagine 242. Position 282 is a sulfotyrosine (tyrosine 282). An intrachain disulfide couples cysteine 293 to cysteine 430. Serine 312 bears the Phosphoserine mark. Positions 362–395 are heparin-binding; it reads RPSLAKKQRFRHRNRKGYRSQRGHSRGRNQNSRR. Residues 364–398 are disordered; sequence SLAKKQRFRHRNRKGYRSQRGHSRGRNQNSRRPSR. The span at 365–388 shows a compositional bias: basic residues; the sequence is LAKKQRFRHRNRKGYRSQRGHSRG. Serine 397 carries the post-translational modification Phosphoserine; by PKA. Sulfotyrosine occurs at positions 417 and 420. The stretch at 419 to 472 is one Hemopexin 4 repeat; sequence DYRMDWLVPATCEPIQSVFFFSGDKYYRVNLRTRRVDTVDPPYPRSIAQYWLGC.

As to quaternary structure, exists in two forms: a single chain 75 kDa form (V75) and a clipped form composed of two chains (65 kDa and 10 kDa) (V65+V10) which are held together by a disulfide bond. Interacts with SERPINE1/PAI1, insulin and C1QBP. (Microbial infection) Interacts (via hemopexin repeat 2) with P.falciparum (isolate CDC / Honduras) SERA5 P47 (via C-terminus); may form heterotetramers of two VTN and SERA5 P47 heterodimers; the interaction may protect merozoites from phagocytosis by host monocytes; VTN glycosylation appears to be dispensable for the interaction. Sulfated on tyrosine residues. In terms of processing, N- and O-glycosylated. Post-translationally, phosphorylation on Thr-69 and Thr-76 favors cell adhesion and spreading. It has been suggested that the active SMB domain may be permitted considerable disulfide bond heterogeneity or variability, thus two alternate disulfide patterns based on 3D structures are described with 1 disulfide bond conserved in both. In terms of processing, phosphorylation sites are present in the extracellular medium. As to expression, expressed in the retina pigment epithelium (at protein level). Expressed in plasma (at protein level). Expressed in serum (at protein level).

Its subcellular location is the secreted. It is found in the extracellular space. The protein localises to the parasitophorous vacuole. Its function is as follows. Vitronectin is a cell adhesion and spreading factor found in serum and tissues. Vitronectin interact with glycosaminoglycans and proteoglycans. Is recognized by certain members of the integrin family and serves as a cell-to-substrate adhesion molecule. Inhibitor of the membrane-damaging effect of the terminal cytolytic complement pathway. Somatomedin-B is a growth hormone-dependent serum factor with protease-inhibiting activity. This chain is Vitronectin (VTN), found in Homo sapiens (Human).